The chain runs to 874 residues: Coatomer subunit gamma-1 (874 aa).

Over residues 1–11 (MLKKFDKKDEE) the composition is skewed to basic and acidic residues. Residues 1 to 21 (MLKKFDKKDEESGGGSNPFQH) form a disordered region. HEAT repeat units lie at residues 64 to 101 (TEATEAFFAMTKLFQSNDPTLRRMCYLTIKEMSCIAED), 283 to 320 (KELAPAVSVLQLFCSSPKAALRYAAVRTLNKVAMKHPS), 322 to 355 (VTACNLDLENLVTDANRSIATLAITTLLKTGSEG), and 356 to 392 (SIDRLMKQISSFMSEISDEFKVVVVQAISALCQKYPR). At Thr594 the chain carries Phosphothreonine. Residues 609–874 (RQEIFQEQLA…PVDIVLASVG (266 aa)) form an interaction with ZNF289/ARFGAP2 region.

This sequence belongs to the COPG family. As to quaternary structure, oligomeric complex that consists of at least the alpha, beta, beta', gamma, delta, epsilon and zeta subunits. Interacts with ZNF289/ARFGAP2 through its C-terminal appendage domain. Interacts with EGFR upon EGF treatment; interaction is essential for regulation of EGF-dependent nuclear transport of EGFR by retrograde trafficking from the Golgi to the ER. The coatomer interacts with KDEL receptors; the interaction is important for retrograde trafficking of KDEL-bearing proteins from the Golgi to the endoplasmic reticulum. Interacts with COPB1. Interacts with TMED10 (via C-terminus). Interacts with TMED2, TMED3, TMED7 and TMED9.

It is found in the cytoplasm. Its subcellular location is the cytosol. The protein localises to the golgi apparatus membrane. It localises to the cytoplasmic vesicle. The protein resides in the COPI-coated vesicle membrane. Functionally, the coatomer is a cytosolic protein complex that binds to dilysine motifs and reversibly associates with Golgi non-clathrin-coated vesicles, which further mediate biosynthetic protein transport from the ER, via the Golgi up to the trans Golgi network. Coatomer complex is required for budding from Golgi membranes, and is essential for the retrograde Golgi-to-ER transport of dilysine-tagged proteins. In mammals, the coatomer can only be recruited by membranes associated to ADP-ribosylation factors (ARFs), which are small GTP-binding proteins; the complex also influences the Golgi structural integrity, as well as the processing, activity, and endocytic recycling of LDL receptors. Required for limiting lipid storage in lipid droplets. Involved in lipid homeostasis by regulating the presence of perilipin family members PLIN2 and PLIN3 at the lipid droplet surface and promoting the association of adipocyte triglyceride lipase (PNPLA2) with the lipid droplet surface to mediate lipolysis. This is Coatomer subunit gamma-1 (COPG1) from Bos taurus (Bovine).